Consider the following 899-residue polypeptide: Protein suppressor of hairy wing (899 aa).

Disordered stretches follow at residues Met1 to Thr33, Ala45 to Asp127, and Ala171 to Arg206. The segment covering Ser21 to Thr31 has biased composition (basic and acidic residues). Over residues Ala45–Ser55 the composition is skewed to low complexity. Composition is skewed to polar residues over residues Lys67–Gly83 and Arg102–Val111. The span at Val183–Val198 shows a compositional bias: acidic residues. The C2H2-type 1; atypical zinc finger occupies His218–Cys240. A C2H2-type 2 zinc finger spans residues Ile288–His311. A C2H2-type 3; atypical zinc finger spans residues Tyr318–His340. 9 consecutive C2H2-type zinc fingers follow at residues Phe347 to His365, Met379 to His401, Tyr412 to His434, Phe440 to His462, Tyr468 to His490, His496 to His518, Tyr522 to His544, Phe552 to His576, and Thr594 to His617. 3 disordered regions span residues Glu646–Ile665, Pro702–Lys734, and Gly865–Ala899. Basic and acidic residues predominate over residues Glu874 to Ala899.

The protein resides in the nucleus. Component of the gypsy chromatin insulator complex which is required for the function of the gypsy chromatin insulator and other endogenous chromatin insulators. Chromatin insulators are regulatory elements which establish independent domains of transcriptional activity within eukaryotic genomes. Insulators have two defining properties; they can block the communication between an enhancer and a promoter when placed between them and can also buffer transgenes from position effect variegation (PEV). Insulators are proposed to structure the chromatin fiber into independent domains of differing transcriptional potential by promoting the formation of distinct chromatin loops. This chromatin looping may involve the formation of insulator bodies, where homotypic interactions between individual subunits of the insulator complex could promote the clustering of widely spaced insulators at the nuclear periphery. Within the gypsy insulator complex, this protein binds specifically to a region of the gypsy element located 3' of the 5' long terminal repeat (LTR), and may also mediate interaction with other endogenous insulators at sites distinct from those recognized by Cp190. Cooperates with pita and cliff to recruit Cp190 and regulate insulator function at the front-ultraabdominal (Fub) boundary. The polypeptide is Protein suppressor of hairy wing (su(Hw)) (Drosophila virilis (Fruit fly)).